The sequence spans 806 residues: N-terminal kinase-like protein (806 aa).

Positions 14–314 (FELSPEPPEG…PEDFCRHKVL (301 aa)) constitute a Protein kinase domain. HEAT repeat units lie at residues 350–388 (IIPVVVKMFSSTDRAMRIRLLQQMEQFIQYLDEPTVNTQ), 389–427 (IFPHVTHGFLDTNPAIREQTVKSMLLLAPKLNEANLNVE), and 507–545 (ILPVLCGLTVDPEKSVRDQAFKTIRSFLSKLESVSEDPT). Disordered regions lie at residues 586-642 (RAHP…TADR) and 663-806 (DDWS…RKLD). Residues 601–611 (RPVPEGNPAPA) show a composition bias toward pro residues. Phosphoserine is present on S752. Over residues 752-762 (SWGEDNWEGLE) the composition is skewed to acidic residues. Residues 755–795 (EDNWEGLEAESRQVKAELARKKREERRREMEAKRAEKKTTK) are a coiled coil. Basic and acidic residues-rich tracts occupy residues 763 to 773 (AESRQVKAELA) and 780 to 793 (RRREMEAKRAEKKT). Residues 791–806 (KKTTKGPMKLGARKLD) are interaction with COPB1.

The protein belongs to the protein kinase superfamily. Homooligomer. Interacts with GORAB. Interacts with COPA, COPB1 and COPB2. Interacts with AP2B1. Expressed in diaphragm, quadriceps, thymus, liver, lung, spleen, kidney, heart and brain. Prominently expressed in neurons, and enriched at central nervous system synapses and neuromuscular junctions.

The protein resides in the cytoplasm. Its subcellular location is the cytoskeleton. The protein localises to the microtubule organizing center. It localises to the centrosome. It is found in the endoplasmic reticulum-Golgi intermediate compartment. The protein resides in the golgi apparatus. Its subcellular location is the cis-Golgi network. Functionally, regulates COPI-mediated retrograde protein traffic at the interface between the Golgi apparatus and the endoplasmic reticulum. Involved in the maintenance of the Golgi apparatus morphology. This chain is N-terminal kinase-like protein (Scyl1), found in Mus musculus (Mouse).